We begin with the raw amino-acid sequence, 164 residues long: Phosphopantetheine adenylyltransferase (164 aa).

Thr-9 is a substrate binding site. Residues 9-10 (TF) and His-17 each bind ATP. Lys-41, Thr-76, and Arg-90 together coordinate substrate. ATP contacts are provided by residues 91–93 (GLR), Glu-101, and 126–132 (YQFVSSS).

This sequence belongs to the bacterial CoaD family. Homohexamer. Mg(2+) is required as a cofactor.

It localises to the cytoplasm. It catalyses the reaction (R)-4'-phosphopantetheine + ATP + H(+) = 3'-dephospho-CoA + diphosphate. Its pathway is cofactor biosynthesis; coenzyme A biosynthesis; CoA from (R)-pantothenate: step 4/5. Its function is as follows. Reversibly transfers an adenylyl group from ATP to 4'-phosphopantetheine, yielding dephospho-CoA (dPCoA) and pyrophosphate. This chain is Phosphopantetheine adenylyltransferase, found in Coprothermobacter proteolyticus (strain ATCC 35245 / DSM 5265 / OCM 4 / BT).